The sequence spans 115 residues: Pancreatic progenitor cell differentiation and proliferation factor B (115 aa).

Residues 21 to 48 (IGSTSSSSSCGSSEYSGEVIPHHPGLPK) form a disordered region. Positions 22 to 37 (GSTSSSSSCGSSEYSG) are enriched in low complexity.

It belongs to the PPDPF family.

Functionally, probable regulator of exocrine pancreas development. This Danio rerio (Zebrafish) protein is Pancreatic progenitor cell differentiation and proliferation factor B (ppdpfb).